Reading from the N-terminus, the 291-residue chain is Polyamine aminopropyltransferase (291 aa).

In terms of domain architecture, PABS spans 5–245 (PGPVSLIEPL…YAVNYIIGSL (241 aa)). S-methyl-5'-thioadenosine is bound at residue Gln-36. Spermidine is bound by residues His-67 and Glu-91. S-methyl-5'-thioadenosine is bound by residues Asp-111 and 143 to 144 (DG). Asp-164 serves as the catalytic Proton acceptor.

Belongs to the spermidine/spermine synthase family. Homodimer or homotetramer.

It is found in the cytoplasm. The catalysed reaction is S-adenosyl 3-(methylsulfanyl)propylamine + putrescine = S-methyl-5'-thioadenosine + spermidine + H(+). Its pathway is amine and polyamine biosynthesis; spermidine biosynthesis; spermidine from putrescine: step 1/1. Its function is as follows. Catalyzes the irreversible transfer of a propylamine group from the amino donor S-adenosylmethioninamine (decarboxy-AdoMet) to putrescine (1,4-diaminobutane) to yield spermidine. In Pyrobaculum islandicum (strain DSM 4184 / JCM 9189 / GEO3), this protein is Polyamine aminopropyltransferase.